The chain runs to 247 residues: Anamorsin homolog (247 aa).

The tract at residues 4–128 is N-terminal SAM-like domain; sequence FKGLQKSLYI…ETGSSARLSF (125 aa). Positions 129–160 are linker; sequence AKKNASALNVWKISGDDEELIDEEDLLDEEDK. [2Fe-2S] cluster-binding residues include Cys171, Cys180, Cys183, and Cys185. The segment at 171 to 185 is fe-S binding site A; that stretch reads CSTTGKRKACKNCSC. 4 residues coordinate [4Fe-4S] cluster: Cys208, Cys211, Cys219, and Cys222. Short sequence motifs (cx2C motif) lie at residues 208–211 and 219–222; these read CGNC and CSTC. Residues 208–222 are fe-S binding site B; the sequence is CGNCYLGDAFRCSTC.

This sequence belongs to the anamorsin family. Monomer. [2Fe-2S] cluster is required as a cofactor. The cofactor is [4Fe-4S] cluster.

The protein resides in the cytoplasm. It localises to the mitochondrion intermembrane space. Functionally, component of the cytosolic iron-sulfur (Fe-S) protein assembly (CIA) machinery. Required for the maturation of extramitochondrial Fe-S proteins. Part of an electron transfer chain functioning in an early step of cytosolic Fe-S biogenesis, facilitating the de novo assembly of a [4Fe-4S] cluster on the cytosolic Fe-S scaffold complex. Electrons are transferred from NADPH via a FAD- and FMN-containing diflavin oxidoreductase. Together with the diflavin oxidoreductase, also required for the assembly of the diferric tyrosyl radical cofactor of ribonucleotide reductase (RNR), probably by providing electrons for reduction during radical cofactor maturation in the catalytic small subunit. The polypeptide is Anamorsin homolog (Drosophila persimilis (Fruit fly)).